A 159-amino-acid polypeptide reads, in one-letter code: MNIKIIGVGKVKEKYFKAGIAEYAKRMERYAKFEIVEVPDEKAPETLSQAEMDAVMAKEGERILAKIKDREYVYALAIKGKERSSEEFAKEINQLATYGHSDITFVIGGSLGLSPAVLKRANTQISFGRFTLPHKLMRLVLAEQIYRAFTIINGLPYHK.

S-adenosyl-L-methionine contacts are provided by leucine 76 and glycine 108.

The protein belongs to the RNA methyltransferase RlmH family. In terms of assembly, homodimer.

The protein resides in the cytoplasm. The enzyme catalyses pseudouridine(1915) in 23S rRNA + S-adenosyl-L-methionine = N(3)-methylpseudouridine(1915) in 23S rRNA + S-adenosyl-L-homocysteine + H(+). Functionally, specifically methylates the pseudouridine at position 1915 (m3Psi1915) in 23S rRNA. The chain is Ribosomal RNA large subunit methyltransferase H from Limosilactobacillus fermentum (strain NBRC 3956 / LMG 18251) (Lactobacillus fermentum).